The sequence spans 296 residues: MANLNKRPDWIKVKAPNSTEYYNTKDLIKNLRLNTVCEEAACPNIGECWSKKHTTVMILGSVCTRACRFCNVKTGRPDLLDPHEPQRLAEAVQKLNLKHVVITSVDRDDLEDGGASHFAECISEIRKSSPNTTIEILTPDFLRKEGAAEIIANAKPDVFNHNVETVPSLYKTIRPGARYYNSLSLLHNIKKLSPDIFTKSGMMVGLGEEINEVVQVMDDLREAKVDFLTIGQYLQPTKNHAEVAKYVTPEEFKYLERVAKTKGFLMVSASPLTRSSYHADEDFQKLKENYQQKLVS.

Residues C37, C42, C48, C63, C67, C70, and S276 each contribute to the [4Fe-4S] cluster site. In terms of domain architecture, Radical SAM core spans 49–265; that stretch reads WSKKHTTVMI…ERVAKTKGFL (217 aa).

This sequence belongs to the radical SAM superfamily. Lipoyl synthase family. It depends on [4Fe-4S] cluster as a cofactor.

The protein resides in the cytoplasm. The catalysed reaction is [[Fe-S] cluster scaffold protein carrying a second [4Fe-4S](2+) cluster] + N(6)-octanoyl-L-lysyl-[protein] + 2 oxidized [2Fe-2S]-[ferredoxin] + 2 S-adenosyl-L-methionine + 4 H(+) = [[Fe-S] cluster scaffold protein] + N(6)-[(R)-dihydrolipoyl]-L-lysyl-[protein] + 4 Fe(3+) + 2 hydrogen sulfide + 2 5'-deoxyadenosine + 2 L-methionine + 2 reduced [2Fe-2S]-[ferredoxin]. It functions in the pathway protein modification; protein lipoylation via endogenous pathway; protein N(6)-(lipoyl)lysine from octanoyl-[acyl-carrier-protein]: step 2/2. Functionally, catalyzes the radical-mediated insertion of two sulfur atoms into the C-6 and C-8 positions of the octanoyl moiety bound to the lipoyl domains of lipoate-dependent enzymes, thereby converting the octanoylated domains into lipoylated derivatives. The polypeptide is Lipoyl synthase (Rickettsia massiliae (strain Mtu5)).